The sequence spans 81 residues: Dermaseptin-S6 (81 aa).

Residues 1 to 22 form the signal peptide; the sequence is MDILKKSLFFILFLGLVSLSIS. Residues 22-49 form a disordered region; that stretch reads SEEEKRENEDEEDQEDDEQSEEKRGLWS. Residues 23-45 constitute a propeptide that is removed on maturation; the sequence is EEEKRENEDEEDQEDDEQSEEKR. Acidic residues predominate over residues 30–41; sequence EDEEDQEDDEQS. Position 78 is an isoleucine amide (I78). A propeptide spanning residues 80 to 81 is cleaved from the precursor; that stretch reads EQ.

Belongs to the frog skin active peptide (FSAP) family. Dermaseptin subfamily. In terms of tissue distribution, expressed by the skin glands.

Its subcellular location is the secreted. In terms of biological role, antimicrobial peptide. The sequence is that of Dermaseptin-S6 from Phyllomedusa sauvagei (Sauvage's leaf frog).